A 566-amino-acid chain; its full sequence is Chaperonin GroEL 1 (566 aa).

Residues 29-32 (TIGP), 86-90 (DGTTT), Gly413, and Asp492 contribute to the ATP site. A disordered region spans residues 520 to 540 (DKPEPPAPAGDGGGDPMGGMG). Over residues 529–540 (GDGGGDPMGGMG) the composition is skewed to gly residues.

The protein belongs to the chaperonin (HSP60) family. In terms of assembly, forms a cylinder of 14 subunits composed of two heptameric rings stacked back-to-back. Interacts with the co-chaperonin GroES.

The protein resides in the cytoplasm. The catalysed reaction is ATP + H2O + a folded polypeptide = ADP + phosphate + an unfolded polypeptide.. Its function is as follows. Together with its co-chaperonin GroES, plays an essential role in assisting protein folding. The GroEL-GroES system forms a nano-cage that allows encapsulation of the non-native substrate proteins and provides a physical environment optimized to promote and accelerate protein folding. The polypeptide is Chaperonin GroEL 1 (Prochlorococcus marinus (strain MIT 9313)).